We begin with the raw amino-acid sequence, 544 residues long: Potential vesicular glutamate transporter vglu-3 (544 aa).

Residues 1–49 (MPNGSIRNCANAVADTVRQTFSRKTWEHKEQLQTITEQKKFFLRKVRWQ) are Cytoplasmic-facing. The chain crosses the membrane as a helical span at residues 50 to 70 (IAILAHFGFAISFGIRSNFGV). The Extracellular portion of the chain corresponds to 71–104 (AKNRMVNNFTDAYGEVHEREFLWTGAEVGMMESS). An N-linked (GlcNAc...) asparagine glycan is attached at asparagine 78. A helical membrane pass occupies residues 105–125 (FFYGYAASQIPAGVLAAKFAP). At 126-127 (NK) the chain is on the cytoplasmic side. Residues 128-148 (IFMLGILVASFMNILSAISFN) traverse the membrane as a helical segment. The Extracellular segment spans residues 149-154 (FHPYTD). A helical transmembrane segment spans residues 155 to 175 (IFVMVVQAVQGLALGVLYPAM). The Cytoplasmic portion of the chain corresponds to 176-193 (HGVWKFWAPPLERSKLAT). A helical membrane pass occupies residues 194–214 (TAFTGSSVGVMTGLPASAYLV). Residues 215-219 (SHFSW) are Extracellular-facing. Residues 220–240 (STPFYVFGVVGIIWSLIWMYV) form a helical membrane-spanning segment. Residues 241 to 285 (SSHSPETHGYISDDEKKQVTEKIGDVAVKNMSLTTLPWRDMMTSS) are Cytoplasmic-facing. The chain crosses the membrane as a helical span at residues 286–306 (AVWAIIICTFCRSWGFFLLLG). Residues 307-323 (NQLTYMKDVLHIDIKNS) lie on the Extracellular side of the membrane. The helical transmembrane segment at 324–344 (GFISIFPQFGMCIVTLATGQL) threads the bilayer. Topologically, residues 345 to 360 (CDYLRSSGKMSTEAVR) are cytoplasmic. The chain crosses the membrane as a helical span at residues 361–381 (KSVNTFGFTVEAMMLGCLAFV). Over 382 to 384 (RDP) the chain is Extracellular. A helical membrane pass occupies residues 385 to 405 (VIAVTCLVIACTGSGSVLSGF). At 406 to 416 (NVNHFDIAPRY) the chain is on the cytoplasmic side. A helical membrane pass occupies residues 417-437 (APILMGIANGLGAVAGVGGMV). Topologically, residues 438–450 (TNTVTYQNPDGWK) are extracellular. A helical membrane pass occupies residues 451–471 (WVFLLAMAIDIFGVIFFLIFA). Residues 472 to 544 (KGDVLPWARE…APAEKSESSS (73 aa)) are Cytoplasmic-facing. Residues 501 to 544 (SLSRKTRNREGDTSYEKMEEDSEMKPCSKKVEARAPAEKSESSS) are disordered. The span at 508–544 (NREGDTSYEKMEEDSEMKPCSKKVEARAPAEKSESSS) shows a compositional bias: basic and acidic residues.

It belongs to the major facilitator superfamily. Sodium/anion cotransporter family. VGLUT subfamily.

It is found in the membrane. This chain is Potential vesicular glutamate transporter vglu-3 (vglu-3), found in Caenorhabditis elegans.